The following is a 185-amino-acid chain: Ribosome-recycling factor (185 aa).

It belongs to the RRF family.

It is found in the cytoplasm. In terms of biological role, responsible for the release of ribosomes from messenger RNA at the termination of protein biosynthesis. May increase the efficiency of translation by recycling ribosomes from one round of translation to another. The sequence is that of Ribosome-recycling factor from Listeria monocytogenes serovar 1/2a (strain ATCC BAA-679 / EGD-e).